Consider the following 461-residue polypeptide: MLKIFNTLTRQKEEFKPIHAGEVGMYVCGITVYDLCHIGHGRTFVSFDVVARYLRFLGYKLKYVRNITDIDDKIIKRANENGESFVALVDRMIAEMHKDFDALNILRPDSEPRATHHIAEIIEITEQLIAKGHAYVADNGDVMFDVPTDPNYGLLSRQDLDQLQAGARVDVVDVKRNPMDFVLWKMSKEGEPSWPSPWGAGRPGWHIECSAMNCKQLGNHFDIHGGGSDLMFPHHENEIAQSTCAHDGEYVNYWMHSGMVMVDREKMSKSLGNFFTVRDVLKYYDAETIRYFLMSGHYRSQLNYSEENLKQARSALERLYTALRGTDKSVDAAGGEAFEARFIEAMDDDFNTPEAYSVLFDMAREVNRLKTEDAAAANAMAAHLRKLAAVLGLLEQEPEAFLQSGAQVDDAEVAEIESLIQQRLDARKAKDWAAADAARDRLNEMGIVLEDGPQGTTWRRK.

Cys-28 lines the Zn(2+) pocket. The short motif at 30–40 (ITVYDLCHIGH) is the 'HIGH' region element. Residues Cys-209, His-234, and Glu-238 each coordinate Zn(2+). Residues 266–270 (KMSKS) carry the 'KMSKS' region motif. Lys-269 is an ATP binding site.

The protein belongs to the class-I aminoacyl-tRNA synthetase family. Monomer. Requires Zn(2+) as cofactor.

The protein resides in the cytoplasm. It carries out the reaction tRNA(Cys) + L-cysteine + ATP = L-cysteinyl-tRNA(Cys) + AMP + diphosphate. The chain is Cysteine--tRNA ligase from Klebsiella pneumoniae (strain 342).